The primary structure comprises 114 residues: MHTYTRACCMGGWYGRETRKRNSHKKVTKRAVEKRKQDSTRQKRRTGAWRPFHDCCCHLGSSVFSRPRAAKSPPFSPSVRAPTDQPADSPAGASGERRGSSDLGKLLNPCVFIW.

Over residues threonine 18–lysine 29 the composition is skewed to basic residues. Disordered stretches follow at residues threonine 18–glycine 47 and serine 65–asparagine 108. Over residues arginine 30–arginine 41 the composition is skewed to basic and acidic residues.

This is an uncharacterized protein from Homo sapiens (Human).